The primary structure comprises 158 residues: MVSIEGRFNDASNFRIAIVVARFNDLITNKLLSGCIDCLQRHGVDTSESSPQLDIIWVPGSMELPLICQSLASKGKYQVLITLGAVIRGDTPHFEVVINESSKGIASVARENGIPIIYGVLTTDTMQQALERAGIKSNLGWNYALQALEMASLMKALR.

5-amino-6-(D-ribitylamino)uracil is bound by residues Phe23, 61-63, and 85-87; these read SME and AVI. Position 90 to 91 (90 to 91) interacts with (2S)-2-hydroxy-3-oxobutyl phosphate; it reads DT. His93 serves as the catalytic Proton donor. Position 118 (Tyr118) interacts with 5-amino-6-(D-ribitylamino)uracil. (2S)-2-hydroxy-3-oxobutyl phosphate is bound at residue Arg132.

Belongs to the DMRL synthase family.

It carries out the reaction (2S)-2-hydroxy-3-oxobutyl phosphate + 5-amino-6-(D-ribitylamino)uracil = 6,7-dimethyl-8-(1-D-ribityl)lumazine + phosphate + 2 H2O + H(+). It functions in the pathway cofactor biosynthesis; riboflavin biosynthesis; riboflavin from 2-hydroxy-3-oxobutyl phosphate and 5-amino-6-(D-ribitylamino)uracil: step 1/2. In terms of biological role, catalyzes the formation of 6,7-dimethyl-8-ribityllumazine by condensation of 5-amino-6-(D-ribitylamino)uracil with 3,4-dihydroxy-2-butanone 4-phosphate. This is the penultimate step in the biosynthesis of riboflavin. The protein is 6,7-dimethyl-8-ribityllumazine synthase of Prochlorococcus marinus (strain MIT 9211).